The sequence spans 275 residues: Ribosome-recycling factor, chloroplastic (275 aa).

Residues 1 to 82 (MAASFSSTAP…SLQKRLVIRS (82 aa)) constitute a chloroplast transit peptide. Residues 215 to 271 (KVALRNIRRDALKSYDKLEKEKKLSEDNVKDLSSDLQKLIDVYMKKIEELYKQKEKE) adopt a coiled-coil conformation.

It belongs to the RRF family.

It is found in the plastid. The protein localises to the chloroplast. Its function is as follows. Responsible for the release of ribosomes from messenger RNA at the termination of chloroplastic protein biosynthesis. The polypeptide is Ribosome-recycling factor, chloroplastic (RRF) (Arabidopsis thaliana (Mouse-ear cress)).